We begin with the raw amino-acid sequence, 111 residues long: Small ribosomal subunit protein bS18 (111 aa).

Positions 1–32 (MDLENTENVENNNNNEEEVKAKGERKAHFNKE) are disordered. Residues 17 to 32 (EEVKAKGERKAHFNKE) show a composition bias toward basic and acidic residues.

The protein belongs to the bacterial ribosomal protein bS18 family. In terms of assembly, part of the 30S ribosomal subunit. Forms a tight heterodimer with protein bS6.

In terms of biological role, binds as a heterodimer with protein bS6 to the central domain of the 16S rRNA, where it helps stabilize the platform of the 30S subunit. This Brachyspira hyodysenteriae (strain ATCC 49526 / WA1) protein is Small ribosomal subunit protein bS18.